The chain runs to 524 residues: MAEQQLGVLKALDVAKTQLYHFTAIVIAGMGFFTDAYDLFCVSLVTKLLGRIYYFNPESAKPGSLPPHVAAAVNGVALCGTLSGQLFFGWLGDKLGRKKVYGLTLVMMILCSVASGLSFGHEAKGVMTTLCFFRFWLGFGIGGDYPLSATIMSEYANKKTRGAFIAAVFAMQGVGILAGGFVALAVSSIFDKKFPAPTYAVNRALSTPPQVDYIWRIIVMFGALPAALTYYWRMKMPETARYTALVAKNIKQATADMSKVLQTDIELEERVEDDVKDPKQNYGLFSKEFLRRHGLHLLGTTSTWFLLDIAFYSQNLFQKDIFSAIGWIPKAATMNATHEVFRIARAQTLIALCSTVPGYWFTVAFIDTIGRFKIQLNGFFMMTVFMFAIAFPYNHWIKPENRIGFVVMYSLTFFFANFGPNATTFIVPAEIFPARLRSTCHGISAAAGKAGAIVGAFGFLYAAQSQDKAKVDAGYPPGIGVKNSLIMLGVLNFIGMLFTFLVPEPKGKSLEELSGEAEVSHDEK.

At 1–24 (MAEQQLGVLKALDVAKTQLYHFTA) the chain is on the cytoplasmic side. A helical transmembrane segment spans residues 25 to 45 (IVIAGMGFFTDAYDLFCVSLV). At 46 to 70 (TKLLGRIYYFNPESAKPGSLPPHVA) the chain is on the extracellular side. The helical transmembrane segment at 71–91 (AAVNGVALCGTLSGQLFFGWL) threads the bilayer. Residues 92–99 (GDKLGRKK) are Cytoplasmic-facing. The helical transmembrane segment at 100–120 (VYGLTLVMMILCSVASGLSFG) threads the bilayer. Residues 121–131 (HEAKGVMTTLC) lie on the Extracellular side of the membrane. The helical transmembrane segment at 132–152 (FFRFWLGFGIGGDYPLSATIM) threads the bilayer. Over 153-161 (SEYANKKTR) the chain is Cytoplasmic. Residues 162–182 (GAFIAAVFAMQGVGILAGGFV) form a helical membrane-spanning segment. Over 183-211 (ALAVSSIFDKKFPAPTYAVNRALSTPPQV) the chain is Extracellular. The helical transmembrane segment at 212 to 232 (DYIWRIIVMFGALPAALTYYW) threads the bilayer. The Cytoplasmic segment spans residues 233 to 292 (RMKMPETARYTALVAKNIKQATADMSKVLQTDIELEERVEDDVKDPKQNYGLFSKEFLRR). The chain crosses the membrane as a helical span at residues 293–313 (HGLHLLGTTSTWFLLDIAFYS). Residues 314 to 348 (QNLFQKDIFSAIGWIPKAATMNATHEVFRIARAQT) lie on the Extracellular side of the membrane. Residues 349 to 369 (LIALCSTVPGYWFTVAFIDTI) traverse the membrane as a helical segment. Residues 370-371 (GR) lie on the Cytoplasmic side of the membrane. A helical transmembrane segment spans residues 372–392 (FKIQLNGFFMMTVFMFAIAFP). At 393 to 402 (YNHWIKPENR) the chain is on the extracellular side. The helical transmembrane segment at 403–423 (IGFVVMYSLTFFFANFGPNAT) threads the bilayer. The Cytoplasmic portion of the chain corresponds to 424–441 (TFIVPAEIFPARLRSTCH). The chain crosses the membrane as a helical span at residues 442-462 (GISAAAGKAGAIVGAFGFLYA). The Extracellular segment spans residues 463–484 (AQSQDKAKVDAGYPPGIGVKNS). Residues 485–505 (LIMLGVLNFIGMLFTFLVPEP) form a helical membrane-spanning segment. Topologically, residues 506–524 (KGKSLEELSGEAEVSHDEK) are cytoplasmic.

This sequence belongs to the major facilitator superfamily. Phosphate:H(+) symporter (TC 2.A.1.9) family. Interacts with NLA. Post-translationally, ubiquitinated by NLA. Ubiquitination of PHT1-1 leads to its degradation by the proteasome. Mostly expressed in roots, especially in trichoblasts and in emerging secondary roots and root hairs, but not in root tips. Also present in hydathodes, axillary buds and peripheral endosperm of germinating seeds.

The protein localises to the cell membrane. With respect to regulation, inhibited by protonophores (e.g. 2,4-dinitrophenol and carbonylcyanide m-chlorophenylhydrazone), the plasma membrane H(+)-ATPase inhibitor diethylstilbestorol, and the phosphate analog arsenate. High-affinity transporter for external inorganic phosphate. Acts as a H(+):phosphate symporter in both low- and high-Pi conditions. Confers sensitivity to arsenate. The polypeptide is Inorganic phosphate transporter 1-1 (PHT1-1) (Arabidopsis thaliana (Mouse-ear cress)).